The following is a 413-amino-acid chain: S-adenosylmethionine synthase (413 aa).

H15 contributes to the ATP binding site. D17 contributes to the Mg(2+) binding site. E43 is a K(+) binding site. L-methionine is bound by residues E56 and Q100. Positions 100–110 are flexible loop; it reads QSPDISQGVND. ATP contacts are provided by residues 171–173, 248–249, D257, 263–264, A280, and K284; these read DGK, KF, and RK. L-methionine is bound at residue D257. K288 contributes to the L-methionine binding site.

This sequence belongs to the AdoMet synthase family. In terms of assembly, homotetramer; dimer of dimers. Mg(2+) serves as cofactor. Requires K(+) as cofactor.

The protein localises to the cytoplasm. The catalysed reaction is L-methionine + ATP + H2O = S-adenosyl-L-methionine + phosphate + diphosphate. It functions in the pathway amino-acid biosynthesis; S-adenosyl-L-methionine biosynthesis; S-adenosyl-L-methionine from L-methionine: step 1/1. Catalyzes the formation of S-adenosylmethionine (AdoMet) from methionine and ATP. The overall synthetic reaction is composed of two sequential steps, AdoMet formation and the subsequent tripolyphosphate hydrolysis which occurs prior to release of AdoMet from the enzyme. This is S-adenosylmethionine synthase from Prochlorococcus marinus (strain MIT 9301).